Here is a 123-residue protein sequence, read N- to C-terminus: Holo-[acyl-carrier-protein] synthase (123 aa).

Mg(2+)-binding residues include D8 and E56.

The protein belongs to the P-Pant transferase superfamily. AcpS family. Mg(2+) serves as cofactor.

The protein resides in the cytoplasm. It catalyses the reaction apo-[ACP] + CoA = holo-[ACP] + adenosine 3',5'-bisphosphate + H(+). Functionally, transfers the 4'-phosphopantetheine moiety from coenzyme A to a Ser of acyl-carrier-protein. This is Holo-[acyl-carrier-protein] synthase from Treponema denticola (strain ATCC 35405 / DSM 14222 / CIP 103919 / JCM 8153 / KCTC 15104).